Here is a 389-residue protein sequence, read N- to C-terminus: 3-oxo-Delta(4,5)-steroid 5-beta-reductase (389 aa).

NADP(+)-binding positions include 35-37, 63-64, 81-82, Thr105, and Gln143; these read TGI, RR, and DI. Active-site residues include Lys147 and Tyr179. NADP(+)-binding positions include Tyr179, Ile206, and 213–215; that span reads SMM.

Belongs to the short-chain dehydrogenases/reductases (SDR) family. Highly divergent. As to quaternary structure, homodimer.

The catalysed reaction is 5beta-cholestan-3-one + NADP(+) = cholest-4-en-3-one + NADPH + H(+). It carries out the reaction 4,5beta-dihydrocortisone + NADP(+) = cortisone + NADPH + H(+). In terms of biological role, involved in cardenolide biosynthesis. Catalyzes the stereospecific conversion of progesterone to 5-beta-pregnane-3,20-dione. Can use progesterone, testosterone, 4-androstene-3,17-dione, cortisol and cortisone as substrates, but not pregnenolone, 21-OH-pregnenolone or isoprogesterone. NADPH could not be replaced by NADH. The protein is 3-oxo-Delta(4,5)-steroid 5-beta-reductase of Digitalis lanata (Grecian foxglove).